A 684-amino-acid chain; its full sequence is Calpain-14 (684 aa).

The Calpain catalytic domain maps to 43–336 (LFEDTSFPAT…FVLLVICKLT (294 aa)). Active-site residues include Cys-101, His-254, and Asn-278. Positions 337–503 (PGLLSQEAAQ…KHIFYEIGSN (167 aa)) are domain III. Residues 504–517 (SGVVFSKEIEDQNE) are linker. A domain IV region spans residues 518–683 (RQDEFFTKFF…KPEWMMMALY (166 aa)). EF-hand domains follow at residues 557 to 592 (FSLE…LKLS), 586 to 621 (WKQL…AGIM), and 651 to 684 (LRVE…ALYS). Ca(2+)-binding residues include Asp-570, Asn-572, Ser-574, Thr-576, and Glu-581.

Belongs to the peptidase C2 family. In terms of tissue distribution, not expressed in tissues tested.

Calcium-regulated non-lysosomal thiol-protease. In Homo sapiens (Human), this protein is Calpain-14 (CAPN14).